A 70-amino-acid chain; its full sequence is MKTSIHPNYNDVQIICSCGNTFKTRSTIDKKELHLDVCSSCHPFYTGKQKIMDSAGRVEKFKSRYASFKR.

Zn(2+) is bound by residues Cys16, Cys18, Cys38, and Cys41.

The protein belongs to the bacterial ribosomal protein bL31 family. Type A subfamily. Part of the 50S ribosomal subunit. It depends on Zn(2+) as a cofactor.

In terms of biological role, binds the 23S rRNA. In Vesicomyosocius okutanii subsp. Calyptogena okutanii (strain HA), this protein is Large ribosomal subunit protein bL31.